The following is a 2340-amino-acid chain: Proto-oncogene tyrosine-protein kinase ROS (2340 aa).

An N-terminal signal peptide occupies residues 1-28 (MKNICWLTLKLVKFVVLGCIIWISVAQS). At 29-1854 (TVLSSCLTSC…EDGVWITETS (1826 aa)) the chain is on the extracellular side. The N-linked (GlcNAc...) asparagine glycan is linked to asparagine 53. Fibronectin type-III domains are found at residues 111 to 206 (LPTA…VPET) and 207 to 295 (APLI…PSPS). Asparagine 334 and asparagine 362 each carry an N-linked (GlcNAc...) asparagine glycan. Positions 567–667 (LPGHPQEVSV…APSVGTTLVP (101 aa)) constitute a Fibronectin type-III 3 domain. N-linked (GlcNAc...) asparagine glycosylation is found at asparagine 935 and asparagine 1011. 2 consecutive Fibronectin type-III domains span residues 943–1038 (IPDP…SVPS) and 1039–1146 (APEN…TSEI). Asparagine 1243 carries an N-linked (GlcNAc...) asparagine glycan. 4 consecutive Fibronectin type-III domains span residues 1442-1549 (ASDM…TKSG), 1550-1649 (VPGA…VNMF), 1651-1744 (TPEK…TKAG), and 1745-1846 (VPSK…LVED). Asparagine 1676 is a glycosylation site (N-linked (GlcNAc...) asparagine). The chain crosses the membrane as a helical span at residues 1855-1875 (FILTIIVGIFLVATVPLTFVW). The Cytoplasmic portion of the chain corresponds to 1876–2340 (HRSLKSHKAS…AHSEHGDVSE (465 aa)). A Protein kinase domain is found at 1938–2216 (LSLRLLLGSG…QLQLFRNVFL (279 aa)). ATP contacts are provided by residues 1944–1952 (LGSGAFGEV) and lysine 1973. Residue aspartate 2072 is the Proton acceptor of the active site. Residues tyrosine 2267 and tyrosine 2327 each carry the phosphotyrosine; by autocatalysis modification.

This sequence belongs to the protein kinase superfamily. Tyr protein kinase family. Insulin receptor subfamily. As to quaternary structure, interacts with PTPN11; may activate the PI3 kinase-mTOR signaling pathway. Interacts with VAV3; constitutive interaction mediating VAV3 phosphorylation. Interacts with PTPN6 (via SH2 1 domain); the interaction is direct and promotes ROS1 dephosphorylation. Post-translationally, phosphorylated. Probably autophosphorylates. Phosphorylation at Tyr-2267 and/or Tyr-2327 recruits PTPN11. Phosphorylation at Tyr-2267 is required for the interaction with PTPN6 that mediates ROS1 dephosphorylation. Phosphorylation at Tyr-2267 stimulates the kinase activity and the activation of the ERK1 signaling cascade. As to expression, expressed by epithelial cells of the caput epididymis (at protein level).

It is found in the cell membrane. It catalyses the reaction L-tyrosyl-[protein] + ATP = O-phospho-L-tyrosyl-[protein] + ADP + H(+). With respect to regulation, inhibited by dephosphorylation by PTPN6. Functionally, receptor tyrosine kinase (RTK) that plays a role in epithelial cell differentiation and regionalization of the proximal epididymal epithelium. NELL2 is an endogenous ligand for ROS1. Upon endogenous stimulation by NELL2, ROS1 activates the intracellular signaling pathway and triggers epididymal epithelial differentiation and subsequent sperm maturation. May activate several downstream signaling pathways related to cell differentiation, proliferation, growth and survival including the PI3 kinase-mTOR signaling pathway. Mediates the phosphorylation of PTPN11, an activator of this pathway. May also phosphorylate and activate the transcription factor STAT3 to control anchorage-independent cell growth. Mediates the phosphorylation and the activation of VAV3, a guanine nucleotide exchange factor regulating cell morphology. May activate other downstream signaling proteins including AKT1, MAPK1, MAPK3, IRS1, and PLCG2. This is Proto-oncogene tyrosine-protein kinase ROS (Ros1) from Mus musculus (Mouse).